The sequence spans 466 residues: Neuropeptide Y receptor type 5 (466 aa).

The Extracellular portion of the chain corresponds to 1-63 (MEVKLEEHFN…YRGSVDDLQY (63 aa)). N-linked (GlcNAc...) asparagine glycosylation is found at N10, N17, N38, and N39. The helical transmembrane segment at 64-84 (FLIGLYTFVSLLGFMGNLLIL) threads the bilayer. The Cytoplasmic segment spans residues 85–98 (MAVMKKRNQKTTVN). A helical transmembrane segment spans residues 99–119 (FLIGNLAFSDILVVLFCSPFT). Residues 120–138 (LTSVLLDQWMFGKAMCHIM) are Extracellular-facing. Cysteines 135 and 219 form a disulfide. The helical transmembrane segment at 139–159 (PFLQCVSVLVSTLILISIAIV) threads the bilayer. Residues 160–177 (RYHMIKHPISNNLTANHG) lie on the Cytoplasmic side of the membrane. The helical transmembrane segment at 178 to 198 (YFLIATVWTLGFAICSPLPVF) threads the bilayer. At 199–229 (HSLVELKETFGSALLSSKYLCVESWPSDSYR) the chain is on the extracellular side. The chain crosses the membrane as a helical span at residues 230–250 (IAFTISLLLVQYILPLVCLTV). Residues 251–389 (SHTSVCRSIS…KKRSRSVFYR (139 aa)) lie on the Cytoplasmic side of the membrane. The tract at residues 323–346 (GPSQEKHLTVPENPGSVRSQLSPS) is disordered. The chain crosses the membrane as a helical span at residues 390 to 410 (LTILILVFAVSWMPLHVFHVV). The Extracellular segment spans residues 411–427 (TDFNDNLISNRHFKLVY). Residues 428-448 (CICHLLGMMSCCLNPILYGFL) form a helical membrane-spanning segment. At 449 to 466 (NNGIKADLRALIHCLHMS) the chain is on the cytoplasmic side. Residue C462 is the site of S-palmitoyl cysteine attachment.

It belongs to the G-protein coupled receptor 1 family.

The protein localises to the cell membrane. In terms of biological role, receptor for neuropeptide Y and peptide YY. The activity of this receptor is mediated by G proteins that inhibit adenylate cyclase activity. Seems to be associated with food intake. Could be involved in feeding disorders. The protein is Neuropeptide Y receptor type 5 (Npy5r) of Mus musculus (Mouse).